The following is a 285-amino-acid chain: Inositol oxygenase (285 aa).

A substrate-binding site is contributed by R29. S33 carries the post-translational modification Phosphoserine. A substrate-binding site is contributed by 85–87 (DES). 3 residues coordinate Fe cation: H98, H123, and D124. Substrate is bound by residues K127 and 141-142 (GD). Fe cation is bound by residues H194, H220, and D253. 220–221 (HS) is a binding site for substrate.

The protein belongs to the myo-inositol oxygenase family. Requires Fe cation as cofactor. In terms of tissue distribution, kidney specific.

It is found in the cytoplasm. It catalyses the reaction myo-inositol + O2 = D-glucuronate + H2O + H(+). It functions in the pathway polyol metabolism; myo-inositol degradation into D-glucuronate; D-glucuronate from myo-inositol: step 1/1. In Homo sapiens (Human), this protein is Inositol oxygenase (MIOX).